The primary structure comprises 609 residues: 1-deoxy-D-xylulose-5-phosphate synthase (609 aa).

Thiamine diphosphate-binding positions include H77 and 118–120; that span reads GHS. D149 provides a ligand contact to Mg(2+). Residues 150–151, N178, Y259, and E342 each bind thiamine diphosphate; that span reads GA. A Mg(2+)-binding site is contributed by N178.

It belongs to the transketolase family. DXPS subfamily. As to quaternary structure, homodimer. The cofactor is Mg(2+). Requires thiamine diphosphate as cofactor.

It carries out the reaction D-glyceraldehyde 3-phosphate + pyruvate + H(+) = 1-deoxy-D-xylulose 5-phosphate + CO2. The protein operates within metabolic intermediate biosynthesis; 1-deoxy-D-xylulose 5-phosphate biosynthesis; 1-deoxy-D-xylulose 5-phosphate from D-glyceraldehyde 3-phosphate and pyruvate: step 1/1. Catalyzes the acyloin condensation reaction between C atoms 2 and 3 of pyruvate and glyceraldehyde 3-phosphate to yield 1-deoxy-D-xylulose-5-phosphate (DXP). The chain is 1-deoxy-D-xylulose-5-phosphate synthase from Listeria monocytogenes serotype 4b (strain CLIP80459).